Reading from the N-terminus, the 192-residue chain is Sarcoplasmic calcium-binding protein, beta chain (192 aa).

Position 1 is an N-acetylalanine (alanine 1). EF-hand domains follow at residues 4 to 39, 56 to 91, 100 to 135, and 136 to 171; these read WDNR…VTLI, IMAN…NCKG, AFKV…RSAF, and ADVK…YAQF. Positions 17, 19, 21, 28, 69, 71, 73, 75, 80, 113, 115, 117, 119, and 124 each coordinate Ca(2+).

SCPs from crayfish, lobster, and shrimp are polymorphic dimers; three isotypes (alpha-alpha, alpha-beta, and beta-beta) have been identified.

Functionally, like parvalbumins, SCPs seem to be more abundant in fast contracting muscles, but no functional relationship can be established from this distribution. In Penaeus sp. (Penoeid shrimp), this protein is Sarcoplasmic calcium-binding protein, beta chain.